A 124-amino-acid chain; its full sequence is MAITKDDILEAVGAMSVMELNDLVKAFEEKFGVSAAAMAVAAAPGAAGAAAAEEQTEFNVILAEVGANKVGVIKAVREITGLGLKEAKDLVDGAPKPVKEGVDKAAAAEAKKKLEDAGAKVDVK.

Belongs to the bacterial ribosomal protein bL12 family. In terms of assembly, homodimer. Part of the ribosomal stalk of the 50S ribosomal subunit. Forms a multimeric L10(L12)X complex, where L10 forms an elongated spine to which 2 to 4 L12 dimers bind in a sequential fashion. Binds GTP-bound translation factors.

Functionally, forms part of the ribosomal stalk which helps the ribosome interact with GTP-bound translation factors. Is thus essential for accurate translation. The protein is Large ribosomal subunit protein bL12 of Cupriavidus taiwanensis (strain DSM 17343 / BCRC 17206 / CCUG 44338 / CIP 107171 / LMG 19424 / R1) (Ralstonia taiwanensis (strain LMG 19424)).